The chain runs to 528 residues: Ivanolysin (528 aa).

The signal sequence occupies residues 1–23 (MKKIMLLLMTLLLVSLPLAQEAQ). The next 4 beta stranded transmembrane spans lie at 213-226 (ESQL…AFKA), 233-242 (VNFGAISEGK), 311-320 (STRVKAAFDT), and 328-340 (KGDT…IQNA). The Conserved undecapeptide signature appears at 482 to 492 (ECTGLAWEWWR). Residues 514–515 (TL) carry the Cholesterol binding motif.

The protein belongs to the cholesterol-dependent cytolysin family. As to quaternary structure, homooligomeric pore complex of 35 to 50 subunits; when inserted in the host membrane.

The protein resides in the secreted. Its subcellular location is the host membrane. In terms of biological role, a cholesterol-dependent toxin that causes cytolysis by forming pores in cholesterol containing host membranes. After binding to target membranes, the protein undergoes a major conformation change, leading to its insertion in the host membrane and formation of an oligomeric pore complex. Cholesterol is required for binding to host membranes, membrane insertion and pore formation; cholesterol binding is mediated by a Thr-Leu pair in the C-terminus. Can be reversibly inactivated by oxidation. In Listeria ivanovii, this protein is Ivanolysin (ilo).